A 55-amino-acid polypeptide reads, in one-letter code: Spermatid nuclear transition protein 1 (55 aa).

The span at 1 to 42 (MSTSRKLKSHGMRRGKNRAPHKGVKRGGSKRKYRKGSLKSRK) shows a compositional bias: basic residues. The tract at residues 1-55 (MSTSRKLKSHGMRRGKNRAPHKGVKRGGSKRKYRKGSLKSRKRCDDANRNYRSHL) is disordered. Ser9, Ser37, and Ser40 each carry phosphoserine.

It belongs to the nuclear transition protein 1 family. In terms of tissue distribution, testis.

It localises to the nucleus. It is found in the chromosome. In terms of biological role, plays a key role in the replacement of histones to protamine in the elongating spermatids of mammals. In condensing spermatids, loaded onto the nucleosomes, where it promotes the recruitment and processing of protamines, which are responsible for histone eviction. This Sus scrofa (Pig) protein is Spermatid nuclear transition protein 1 (TNP1).